The following is a 73-amino-acid chain: DNA-directed RNA polymerase subunit omega (73 aa).

It belongs to the RNA polymerase subunit omega family. As to quaternary structure, the RNAP catalytic core consists of 2 alpha, 1 beta, 1 beta' and 1 omega subunit. When a sigma factor is associated with the core the holoenzyme is formed, which can initiate transcription.

It catalyses the reaction RNA(n) + a ribonucleoside 5'-triphosphate = RNA(n+1) + diphosphate. Its function is as follows. Promotes RNA polymerase assembly. Latches the N- and C-terminal regions of the beta' subunit thereby facilitating its interaction with the beta and alpha subunits. In Clostridium novyi (strain NT), this protein is DNA-directed RNA polymerase subunit omega.